The chain runs to 356 residues: Tyrosine recombinase XerS (356 aa).

A Core-binding (CB) domain is found at 16-121 (VMPWYVLDYY…ALSSLYKYLT (106 aa)). Residues 169–354 (AFLDYVDKEY…VNDEQKNALD (186 aa)) form the Tyr recombinase domain. Residues arginine 210, lysine 234, histidine 306, arginine 309, and histidine 332 contribute to the active site. Residue tyrosine 341 is the O-(3'-phospho-DNA)-tyrosine intermediate of the active site.

The protein belongs to the 'phage' integrase family. XerS subfamily.

It localises to the cytoplasm. FtsK is required for recombination. In terms of biological role, site-specific tyrosine recombinase, which acts by catalyzing the cutting and rejoining of the recombining DNA molecules. Essential to convert dimers of the bacterial chromosome into monomers to permit their segregation at cell division. The chain is Tyrosine recombinase XerS from Streptococcus pyogenes serotype M28 (strain MGAS6180).